The following is a 1334-amino-acid chain: WASH complex subunit 2 (1334 aa).

The tract at residues methionine 1–aspartate 219 is sufficient for interaction with WASHC3, WASHC4 and WASHC5; required for interaction with WASHC1. Phosphoserine occurs at positions 157, 159, 204, 205, and 209. Over residues glycine 201 to aspartate 213 the composition is skewed to low complexity. Residues glycine 201–lysine 471 are disordered. 2 stretches are compositionally biased toward acidic residues: residues aspartate 219 to aspartate 232 and serine 249 to glutamate 274. At serine 284 the chain carries Phosphoserine. Positions leucine 289–alanine 324 are enriched in basic and acidic residues. Residue threonine 322 is modified to Phosphothreonine. The segment at serine 347–glutamine 594 is sufficient for interaction with CCDC93. Residues arginine 348 to glutamine 1334 are interaction with VPS35. The LFa 1 signature appears at leucine 358 to phenylalanine 368. At serine 388 the chain carries Phosphoserine. Short sequence motifs (LFa) lie at residues leucine 441 to phenylalanine 457 and isoleucine 476 to phenylalanine 485. Residues phenylalanine 442–asparagine 454 are compositionally biased toward acidic residues. A disordered region spans residues leucine 492 to alanine 650. Over residues leucine 513–glycine 530 the composition is skewed to polar residues. Short sequence motifs (LFa) lie at residues leucine 531–phenylalanine 542 and leucine 566–phenylalanine 577. Serine 533 and serine 538 each carry phosphoserine. The span at leucine 541 to proline 561 shows a compositional bias: low complexity. 2 stretches are compositionally biased toward polar residues: residues lysine 584–glutamine 594 and glutamate 601–leucine 611. 2 positions are modified to phosphoserine: serine 613 and serine 614. Over residues serine 625–leucine 639 the composition is skewed to basic and acidic residues. 2 consecutive short sequence motifs (LFa) follow at residues leucine 658–phenylalanine 670 and leucine 686–phenylalanine 698. A disordered region spans residues alanine 691 to glutamine 837. Residues serine 723, serine 747, serine 752, serine 783, and serine 798 each carry the phosphoserine modification. Over residues phenylalanine 800–serine 811 the composition is skewed to acidic residues. The span at aspartate 818–proline 830 shows a compositional bias: basic and acidic residues. 2 short sequence motifs (LFa) span residues valine 835–phenylalanine 843 and aspartate 852–phenylalanine 858. 2 disordered regions span residues lysine 862–arginine 948 and alanine 1014–histidine 1225. Residues serine 870 and serine 873 each carry the phosphoserine modification. The LFa 10 signature appears at leucine 874–phenylalanine 884. A compositionally biased stretch (basic and acidic residues) spans proline 894 to valine 906. A compositionally biased stretch (polar residues) spans leucine 908–glycine 919. Positions glutamine 932–glutamine 1334 are interaction with phospholipids. A compositionally biased stretch (basic residues) spans asparagine 1023–arginine 1041. Positions lysine 1024–arginine 1042 are required for interaction with F-actin-capping protein subunit alpha (CAPZA1 or CAPZA2 or CAPZA3). Residues serine 1049, serine 1067, serine 1084, and serine 1109 each carry the phosphoserine modification. 3 consecutive short sequence motifs (LFa) follow at residues leucine 1124–phenylalanine 1131, alanine 1164–phenylalanine 1178, and leucine 1194–phenylalanine 1202. Residues serine 1169, serine 1172, and serine 1173 each carry the phosphoserine modification. The segment covering alanine 1203–histidine 1225 has biased composition (basic and acidic residues). Short sequence motifs (LFa) lie at residues isoleucine 1227 to phenylalanine 1233, leucine 1255 to phenylalanine 1263, and methionine 1283 to phenylalanine 1292. The segment at serine 1294–glutamine 1334 is disordered. Positions glutamine 1297–alanine 1311 are enriched in low complexity. The LFa 17 motif lies at isoleucine 1323–phenylalanine 1331. Serine 1333 carries the phosphoserine modification.

It belongs to the FAM21 family. As to quaternary structure, component of the WASH core complex also described as WASH regulatory complex (SHRC) composed of WASHC1, WASHC2, WASHC3, WASHC4 and WASHC5; in the complex interacts (via N-terminus) directly with WASHC1. The WASH core complex associates with the F-actin-capping protein dimer (formed by CAPZA1, CAPZA2 or CAPZA3 and CAPZB) in a transient or substoichiometric manner which was initially described as WASH complex. Interacts with VPS35; mediates the association with the retromer CSC complex. Interacts with FKBP15. Interacts with CCDC93, CCDC22, VPS35L; indicative for an association of the WASH core complex with the CCC and retriever complexes. Directly interacts with TBC1D23.

It localises to the early endosome membrane. The protein localises to the cell membrane. Functionally, acts as a component of the WASH core complex that functions as a nucleation-promoting factor (NPF) at the surface of endosomes, where it recruits and activates the Arp2/3 complex to induce actin polymerization, playing a key role in the fission of tubules that serve as transport intermediates during endosome sorting. Mediates the recruitment of the WASH core complex to endosome membranes via binding to phospholipids and VPS35 of the retromer CSC. Mediates the recruitment of the F-actin-capping protein dimer to the WASH core complex probably promoting localized F-actin polymerization needed for vesicle scission. Via its C-terminus binds various phospholipids, most strongly phosphatidylinositol 4-phosphate (PtdIns-(4)P), phosphatidylinositol 5-phosphate (PtdIns-(5)P) and phosphatidylinositol 3,5-bisphosphate (PtdIns-(3,5)P2). Involved in the endosome-to-plasma membrane trafficking and recycling of SNX27-retromer-dependent cargo proteins, such as GLUT1. Required for the association of DNAJC13, ENTR1, ANKRD50 with retromer CSC subunit VPS35. Required for the endosomal recruitment of CCC and retriever complexes subunits COMMD1 and CCDC93 as well as the retrievere complex subunit VPS35L. This is WASH complex subunit 2 from Mus musculus (Mouse).